Consider the following 332-residue polypeptide: UPF0194 membrane protein YbhG (332 aa).

The first 16 residues, 1 to 16 (MMKKPVVIGLAVVVLA), serve as a signal peptide directing secretion. Residues 108 to 209 (EEIAQAAAAV…LNLQDSTLIA (102 aa)) are a coiled coil.

The protein belongs to the UPF0194 family.

It is found in the periplasm. This Escherichia coli O127:H6 (strain E2348/69 / EPEC) protein is UPF0194 membrane protein YbhG.